The chain runs to 383 residues: tRNA(Met) cytidine acetate ligase (383 aa).

ATP contacts are provided by residues 7 to 20 (ITEYNPLHNGHRYH), Gly-101, Asn-150, and Arg-175.

This sequence belongs to the TmcAL family.

The protein localises to the cytoplasm. It carries out the reaction cytidine(34) in elongator tRNA(Met) + acetate + ATP = N(4)-acetylcytidine(34) in elongator tRNA(Met) + AMP + diphosphate. In terms of biological role, catalyzes the formation of N(4)-acetylcytidine (ac(4)C) at the wobble position of elongator tRNA(Met), using acetate and ATP as substrates. First activates an acetate ion to form acetyladenylate (Ac-AMP) and then transfers the acetyl group to tRNA to form ac(4)C34. This chain is tRNA(Met) cytidine acetate ligase, found in Lactiplantibacillus plantarum (strain ATCC BAA-793 / NCIMB 8826 / WCFS1) (Lactobacillus plantarum).